The following is a 770-amino-acid chain: Multifunctional tryptophan biosynthesis protein (770 aa).

The 201-residue stretch at 25-225 (NVILIDNYDS…LKLTAGTWEG (201 aa)) folds into the Glutamine amidotransferase type-1 domain. L-glutamine is bound at residue 76–78 (GPG). Cys104 serves as the catalytic Nucleophile; for GATase activity. L-glutamine-binding positions include Gln108 and 154–155 (SL). Catalysis depends on for GATase activity residues His199 and Glu201. The tract at residues 228 to 251 (KHFGEQSSTTKATVPSNPPPKTDK) is disordered. Residues 232–242 (EQSSTTKATVP) are compositionally biased toward polar residues. The interval 255–519 (ILERIYDHRR…DTATFIAELL (265 aa)) is indole-3-glycerol phosphate synthase. The interval 535–770 (LVKICGTRSE…RAFVQAVRGL (236 aa)) is N-(5'-phosphoribosyl)anthranilate isomerase.

The enzyme catalyses N-(5-phospho-beta-D-ribosyl)anthranilate = 1-(2-carboxyphenylamino)-1-deoxy-D-ribulose 5-phosphate. The catalysed reaction is 1-(2-carboxyphenylamino)-1-deoxy-D-ribulose 5-phosphate + H(+) = (1S,2R)-1-C-(indol-3-yl)glycerol 3-phosphate + CO2 + H2O. It carries out the reaction chorismate + L-glutamine = anthranilate + pyruvate + L-glutamate + H(+). Its pathway is amino-acid biosynthesis; L-tryptophan biosynthesis; L-tryptophan from chorismate: step 1/5. It participates in amino-acid biosynthesis; L-tryptophan biosynthesis; L-tryptophan from chorismate: step 3/5. The protein operates within amino-acid biosynthesis; L-tryptophan biosynthesis; L-tryptophan from chorismate: step 4/5. Functionally, trifunctional enzyme bearing the Gln amidotransferase (GATase) domain of anthranilate synthase, indole-glycerolphosphate synthase, and phosphoribosylanthranilate isomerase activities. This chain is Multifunctional tryptophan biosynthesis protein (trpC), found in Aspergillus niger.